An 804-amino-acid chain; its full sequence is MLNLLNLFKKDRLWDFDGGIHPPEMKTQSNGTPLRHLPLPAQFVLPLKQHIGHEGEIGVRPGDQVLRGQPLTFGTGRMLPVHAPTSGTVSKIAPHMTAHPSALAEMCLFILPDGEDRWCEKRPLEDYRSVERSELVARVHQAGVAGLGGAGFPTASKLKGGLHGVNTLIINAAECEPYITADDRLMQDHAAEVLEGSRILAWILQAERVLIGIEDNKPEAIAALKKALGSATDLHIRVIPTKYPSGGAKQLTKILTGKEVPHGGRSTDIGVLMQNVGTAFAVKRAIIDGEPLTERVVTLTGESVAQPGNVWARLGTPISHLLQHAGFIPGAEQMVVMGGPLMGFTLPTLDVPVVKITNCILAPAASEMGQNEAEQGCIRCSACADACPAALLPQQLYWYSRGGDHDKARAHNIADCIECGACAYVCPSNIPLVQYYRQEKAEIQAIDLEAERAALAKNRFEARQQRLEREKAARSAKHQQAKRSVASSDAGAIAAARERVAARQAEGVSPENHADNSLQAAVQAQHEAEVRVHQADLQAANEPVTRQTLDPRKAAVEAAIARTKAKKAAQAAEASPTEAPQQSAPEDEPRKAAVAAAVARTKAKKAAQAAEASPTEAPQQSAPEDVPRKAAVAAAVARAKAKKAAQAAEASATEAPQQSAPEHDPRKAAVAAAVARAKAKKAAQAAEASATEAPLQPAPEDDPRKAAVAAAVARAKAKKAAQAAEASATEAPLQPAPEDDPRKAAVAAAVARAKAKKAAQAAEASATEAPLQPAPEDDPRKAAIAAAIARAKARKTQQPSMQED.

4Fe-4S ferredoxin-type domains lie at 366–397 (SEMG…QQLY) and 407–436 (KARA…VQYY). [4Fe-4S] cluster is bound by residues cysteine 377, cysteine 380, cysteine 383, cysteine 387, cysteine 416, cysteine 419, cysteine 422, and cysteine 426. Disordered regions lie at residues 466 to 532 (RLER…EVRV) and 567 to 804 (KAAQ…MQED). 7 stretches are compositionally biased toward low complexity: residues 484–495 (SVASSDAGAIAA), 567–582 (KAAQ…APQQ), 592–619 (AAVA…EAPQ), 629–660 (KAAV…QQSA), 668–693 (AAVA…ATEA), 706–731 (AAVA…ATEA), and 744–769 (AAVA…ATEA).

This sequence belongs to the 4Fe4S bacterial-type ferredoxin family. RnfC subfamily. As to quaternary structure, the complex is composed of six subunits: RnfA, RnfB, RnfC, RnfD, RnfE and RnfG. [4Fe-4S] cluster serves as cofactor.

The protein resides in the cell inner membrane. Its function is as follows. Part of a membrane-bound complex that couples electron transfer with translocation of ions across the membrane. This is Ion-translocating oxidoreductase complex subunit C from Erwinia tasmaniensis (strain DSM 17950 / CFBP 7177 / CIP 109463 / NCPPB 4357 / Et1/99).